Here is a 224-residue protein sequence, read N- to C-terminus: dTTP/UTP pyrophosphatase (224 aa).

Asp-77 serves as the catalytic Proton acceptor.

Belongs to the Maf family. YhdE subfamily. A divalent metal cation is required as a cofactor.

Its subcellular location is the cytoplasm. It carries out the reaction dTTP + H2O = dTMP + diphosphate + H(+). It catalyses the reaction UTP + H2O = UMP + diphosphate + H(+). Its function is as follows. Nucleoside triphosphate pyrophosphatase that hydrolyzes dTTP and UTP. May have a dual role in cell division arrest and in preventing the incorporation of modified nucleotides into cellular nucleic acids. This chain is dTTP/UTP pyrophosphatase, found in Dehalococcoides mccartyi (strain CBDB1).